Consider the following 63-residue polypeptide: Large ribosomal subunit protein bL32 (63 aa).

Positions 1–16 (MAVPKRKTSRMKRGFR) are enriched in basic residues. Residues 1–22 (MAVPKRKTSRMKRGFRRSADAI) form a disordered region.

Belongs to the bacterial ribosomal protein bL32 family.

In Beijerinckia indica subsp. indica (strain ATCC 9039 / DSM 1715 / NCIMB 8712), this protein is Large ribosomal subunit protein bL32.